The sequence spans 1830 residues: Urea amidolyase (1830 aa).

ATP is bound by residues 115–122 (GAIVIGKT), Lys-740, Glu-823, and Asn-858. A Biotin carboxylation domain is found at 625–1068 (PFETVLIANR…ATKILDSYDY (444 aa)). The region spanning 744 to 941 (REIAEKAGVP…LVEWMLRIAA (198 aa)) is the ATP-grasp domain. In terms of domain architecture, Biotinyl-binding spans 1752–1830 (AVEEEYPEDA…DAGDLVAVIQ (79 aa)). Lys-1796 is subject to N6-biotinyllysine.

It belongs to the DUR1,2 family. Monomer. Biotin serves as cofactor.

The catalysed reaction is urea + hydrogencarbonate + ATP = urea-1-carboxylate + ADP + phosphate + H(+). It catalyses the reaction urea-1-carboxylate + H2O + 3 H(+) = 2 NH4(+) + 2 CO2. It participates in nitrogen metabolism; urea degradation; CO(2) and NH(3) from urea (allophanate route): step 1/2. The protein operates within nitrogen metabolism; urea degradation; CO(2) and NH(3) from urea (allophanate route): step 2/2. In terms of biological role, involved in uracil catabolism. Hydrolysis of urea to ammonia and CO(2). This Lachancea kluyveri (Yeast) protein is Urea amidolyase (DUR1,2).